A 2096-amino-acid chain; its full sequence is Tudor domain-containing protein 6 (2096 aa).

One can recognise a Tudor 1 domain in the interval 65-120 (ASASPGELCLVQVGLLWHRCRVVSRQAQESRVFLLDEGRTITAGAGSLAPGRREFF). The tract at residues 287–316 (YRGSTGTGDENSTSATWEEREESPDKPGSP) is disordered. Residues 288-302 (RGSTGTGDENSTSAT) show a composition bias toward polar residues. At threonine 293 the chain carries Phosphothreonine. Tudor domains lie at 310 to 369 (PDKP…YFRM), 536 to 593 (KPEP…FRQL), 816 to 875 (HQRN…FLKV), 1033 to 1088 (PLNP…AYDV), 1352 to 1411 (PLQR…NAIL), and 1567 to 1626 (CPYI…ELLS). Phosphoserine occurs at positions 1722 and 2062. In terms of domain architecture, Tudor 8 spans 2026-2084 (AFTVGSKCVVWSSLRNTWSKCEILETAEEGTRVLNLSNGMEEIVNPENVWNGIPKLDKS).

As to quaternary structure, found in a mRNP complex (i.e. messenger ribonucleoproteins which correspond to mRNA with bound proteins), at least composed of TDRD1, TDRD6, TDRD7 and DDX4. Found in a complex, at least composed of PIWIL1, PIWIL2, DDX4 and TDRD6. Interacts with Tex19.1 and probably Tex19.2. Interacts with PRMT5. Interacts with SNRPB (when methylated); to trigger spliceosome formation. Post-translationally, undergoes proteolytic cleavage near the C-terminal by an unknown protease during the transition from meiosis I to meiosis II in primary spermatocytes.

The protein localises to the cytoplasm. In terms of biological role, tudor domain-containing protein involved in germ cell development, more specifically the formation of chromatoid body (during spermiogenesis), Balbiani body (during oogenesis), germ plasm (upon fertilization), and for proper miRNA expression and spliceosome maturation. Essential for RNA-dependent helicase UPF1 localization to chromatoid body, for UPF1-UPF2 and UPF1-DDX4 interactions which are required for mRNA degradation, using the extended 3' UTR-triggered nonsense-mediated mRNA decay (NMD) pathway. Involved in spliceosome maturation and mRNA splicing in prophase I spermatocytes through interaction with arginine N-methyltransferase PRMT5 and symmetrically arginine dimethylated SNRPB (small nuclear ribonucleoprotein-associated protein). The sequence is that of Tudor domain-containing protein 6 from Homo sapiens (Human).